Here is a 186-residue protein sequence, read N- to C-terminus: Small ribosomal subunit protein uS7 (186 aa).

The protein belongs to the universal ribosomal protein uS7 family. Part of the 30S ribosomal subunit.

Its function is as follows. One of the primary rRNA binding proteins, it binds directly to 16S rRNA where it nucleates assembly of the head domain of the 30S subunit. Is located at the subunit interface close to the decoding center. The polypeptide is Small ribosomal subunit protein uS7 (Methanothermobacter thermautotrophicus (strain ATCC 29096 / DSM 1053 / JCM 10044 / NBRC 100330 / Delta H) (Methanobacterium thermoautotrophicum)).